The primary structure comprises 480 residues: ATP synthase subunit beta (480 aa).

154 to 161 (GGAGVGKT) lines the ATP pocket.

Belongs to the ATPase alpha/beta chains family. As to quaternary structure, F-type ATPases have 2 components, CF(1) - the catalytic core - and CF(0) - the membrane proton channel. CF(1) has five subunits: alpha(3), beta(3), gamma(1), delta(1), epsilon(1). CF(0) has four main subunits: a(1), b(1), b'(1) and c(9-12).

The protein localises to the cell inner membrane. The catalysed reaction is ATP + H2O + 4 H(+)(in) = ADP + phosphate + 5 H(+)(out). Functionally, produces ATP from ADP in the presence of a proton gradient across the membrane. The catalytic sites are hosted primarily by the beta subunits. This Bradyrhizobium sp. (strain ORS 278) protein is ATP synthase subunit beta.